The sequence spans 608 residues: Elongation factor 4 (608 aa).

Positions 11–193 (SHIRNFSIVA…AIVHKLPAPK (183 aa)) constitute a tr-type G domain. Residues 23–28 (DHGKST) and 140–143 (NKID) contribute to the GTP site.

It belongs to the TRAFAC class translation factor GTPase superfamily. Classic translation factor GTPase family. LepA subfamily.

The protein localises to the cell inner membrane. The enzyme catalyses GTP + H2O = GDP + phosphate + H(+). Required for accurate and efficient protein synthesis under certain stress conditions. May act as a fidelity factor of the translation reaction, by catalyzing a one-codon backward translocation of tRNAs on improperly translocated ribosomes. Back-translocation proceeds from a post-translocation (POST) complex to a pre-translocation (PRE) complex, thus giving elongation factor G a second chance to translocate the tRNAs correctly. Binds to ribosomes in a GTP-dependent manner. This Rhizobium meliloti (strain 1021) (Ensifer meliloti) protein is Elongation factor 4.